The sequence spans 165 residues: 6,7-dimethyl-8-ribityllumazine synthase (165 aa).

5-amino-6-(D-ribitylamino)uracil-binding positions include tryptophan 26, 57-59, and 79-81; these read SVE and VVV. (2S)-2-hydroxy-3-oxobutyl phosphate is bound at residue 84–85; it reads AT. Histidine 87 functions as the Proton donor in the catalytic mechanism. Histidine 112 serves as a coordination point for 5-amino-6-(D-ribitylamino)uracil. Arginine 126 serves as a coordination point for (2S)-2-hydroxy-3-oxobutyl phosphate.

This sequence belongs to the DMRL synthase family.

The catalysed reaction is (2S)-2-hydroxy-3-oxobutyl phosphate + 5-amino-6-(D-ribitylamino)uracil = 6,7-dimethyl-8-(1-D-ribityl)lumazine + phosphate + 2 H2O + H(+). It functions in the pathway cofactor biosynthesis; riboflavin biosynthesis; riboflavin from 2-hydroxy-3-oxobutyl phosphate and 5-amino-6-(D-ribitylamino)uracil: step 1/2. Catalyzes the formation of 6,7-dimethyl-8-ribityllumazine by condensation of 5-amino-6-(D-ribitylamino)uracil with 3,4-dihydroxy-2-butanone 4-phosphate. This is the penultimate step in the biosynthesis of riboflavin. In Salinispora arenicola (strain CNS-205), this protein is 6,7-dimethyl-8-ribityllumazine synthase.